An 86-amino-acid chain; its full sequence is Cytochrome c oxidase subunit 6B1 (86 aa).

Alanine 2 bears the N-acetylalanine mark. The CHCH domain maps to 27-73 (TRNCWQNYLDFHRCEKAMTAKGGDVSVCEWYRRVYKSLCPISWVSTW). Residues 30-40 (CWQNYLDFHRC) carry the Cx9C motif motif. Disulfide bonds link cysteine 30–cysteine 65 and cysteine 40–cysteine 54. Residues 54–65 (CEWYRRVYKSLC) carry the Cx10C motif motif. The residue at position 62 (lysine 62) is an N6-acetyllysine.

It belongs to the cytochrome c oxidase subunit 6B family. Component of the cytochrome c oxidase (complex IV, CIV), a multisubunit enzyme composed of 14 subunits. The complex is composed of a catalytic core of 3 subunits MT-CO1, MT-CO2 and MT-CO3, encoded in the mitochondrial DNA, and 11 supernumerary subunits COX4I1 (or COX4I2), COX5A, COX5B, COX6A2 (or COX6A1), COX6B1 (or COX6B2), COX6C, COX7A1 (or COX7A2), COX7B, COX7C, COX8B and NDUFA4, which are encoded in the nuclear genome. The complex exists as a monomer or a dimer and forms supercomplexes (SCs) in the inner mitochondrial membrane with NADH-ubiquinone oxidoreductase (complex I, CI) and ubiquinol-cytochrome c oxidoreductase (cytochrome b-c1 complex, complex III, CIII), resulting in different assemblies (supercomplex SCI(1)III(2)IV(1) and megacomplex MCI(2)III(2)IV(2)).

It is found in the mitochondrion inner membrane. It participates in energy metabolism; oxidative phosphorylation. In terms of biological role, component of the cytochrome c oxidase, the last enzyme in the mitochondrial electron transport chain which drives oxidative phosphorylation. The respiratory chain contains 3 multisubunit complexes succinate dehydrogenase (complex II, CII), ubiquinol-cytochrome c oxidoreductase (cytochrome b-c1 complex, complex III, CIII) and cytochrome c oxidase (complex IV, CIV), that cooperate to transfer electrons derived from NADH and succinate to molecular oxygen, creating an electrochemical gradient over the inner membrane that drives transmembrane transport and the ATP synthase. Cytochrome c oxidase is the component of the respiratory chain that catalyzes the reduction of oxygen to water. Electrons originating from reduced cytochrome c in the intermembrane space (IMS) are transferred via the dinuclear copper A center (CU(A)) of subunit 2 and heme A of subunit 1 to the active site in subunit 1, a binuclear center (BNC) formed by heme A3 and copper B (CU(B)). The BNC reduces molecular oxygen to 2 water molecules using 4 electrons from cytochrome c in the IMS and 4 protons from the mitochondrial matrix. The protein is Cytochrome c oxidase subunit 6B1 (COX6B1) of Bos taurus (Bovine).